Reading from the N-terminus, the 955-residue chain is Leucine-rich repeat-containing G-protein coupled receptor 4 (955 aa).

The N-terminal stretch at 1–21 (MGCPGWPLALFALLLASCSGG) is a signal peptide. Residues 22–547 (PSGVSSPAPC…LLGSWMIRLT (526 aa)) lie on the Extracellular side of the membrane. The region spanning 26-59 (SSPAPCPAPCACDLDGGADCSGKGLVTVPDGLSV) is the LRRNT domain. Intrachain disulfides connect Cys31–Cys37 and Cys35–Cys45. LRR repeat units lie at residues 57–81 (LSVF…AFKG), 83–105 (PYLE…ALSG), 106–129 (LKEL…SLKG), 131–153 (VSLQ…SFEG), 155–177 (VQLR…PLSN), 178–201 (LPSL…AFSN), 203–225 (SSLV…CFHG), 226–249 (LDNL…IRSL), 250–272 (PNLK…AFVK), and 274–296 (PLLR…AFQN). The N-linked (GlcNAc...) asparagine glycan is linked to Asn201. N-linked (GlcNAc...) asparagine glycans are attached at residues Asn296 and Asn316. 5 LRR repeats span residues 320–343 (TNNL…FCQE), 345–365 (KMLR…GFEG), 366–389 (CSSL…TFQG), 390–413 (LAAL…AFVT), and 415–437 (KALT…GLHG). Cys341 and Cys366 are disulfide-bonded. A glycan (N-linked (GlcNAc...) asparagine) is linked at Asn384. 2 disulfide bridges follow: Cys472/Cys525 and Cys473/Cys478. A helical transmembrane segment spans residues 548–568 (VWFIFLLALIFNVIVIVTMFA). The Cytoplasmic portion of the chain corresponds to 569–578 (SCSQLTSSKL). The chain crosses the membrane as a helical span at residues 579–599 (FIGLIAVSNLFMGVYTGTLTV). Over 600–623 (LDTISWGQFAEFGIWWETGNGCKV) the chain is Extracellular. An intrachain disulfide couples Cys621 to Cys696. The chain crosses the membrane as a helical span at residues 624–644 (AGFLAIFSSESAIFFLMLAAI). Residues 645-666 (ERSLSAKDIIKKEKHQHLRKFQ) are Cytoplasmic-facing. Residues 667-687 (VASLLAVLLAAAAGCLPLFHI) form a helical membrane-spanning segment. At 688 to 706 (GEFSSSPLCLPFPTGETPS) the chain is on the extracellular side. Residues 707–727 (LGFTVTLVLLNSLAFLIMVIT) form a helical membrane-spanning segment. Residues 728-759 (YTKLYCTIEKEDLSENAESSMIKHVAWLIFTN) are Cytoplasmic-facing. Residues 760 to 780 (CIFFCPVAFFSFAPLITAIYI) traverse the membrane as a helical segment. Over 781-786 (SPEIMK) the chain is Extracellular. The chain crosses the membrane as a helical span at residues 787–807 (SVTLIFLPLPACLNPVLYVFF). Topologically, residues 808–955 (NPKFKEDWKL…YAYNIPRMKD (148 aa)) are cytoplasmic.

Belongs to the G-protein coupled receptor 1 family.

It localises to the cell membrane. Its function is as follows. Receptor for R-spondins that potentiates the canonical Wnt signaling pathway and is involved in the formation of various organs. Upon binding to R-spondins (RSPO1, RSPO2, RSPO3 or RSPO4), associates with phosphorylated LRP6 and frizzled receptors that are activated by extracellular Wnt receptors, triggering the canonical Wnt signaling pathway to increase expression of target genes. In contrast to classical G-protein coupled receptors, does not activate heterotrimeric G-proteins to transduce the signal. Its function as activator of the Wnt signaling pathway is required for the development of various organs, including liver, kidney, intestine, bone, reproductive tract and eye. May play a role in regulating the circadian rhythms of plasma lipids. Required for proper development of GnRH neurons (gonadotropin-releasing hormone expressing neurons) that control the release of reproductive hormones from the pituitary gland. The chain is Leucine-rich repeat-containing G-protein coupled receptor 4 (lgr4) from Xenopus tropicalis (Western clawed frog).